The chain runs to 61 residues: Small ribosomal subunit protein uS14 (61 aa).

C24, C27, C40, and C43 together coordinate Zn(2+).

Belongs to the universal ribosomal protein uS14 family. Zinc-binding uS14 subfamily. In terms of assembly, part of the 30S ribosomal subunit. Contacts proteins S3 and S10. Zn(2+) is required as a cofactor.

In terms of biological role, binds 16S rRNA, required for the assembly of 30S particles and may also be responsible for determining the conformation of the 16S rRNA at the A site. This chain is Small ribosomal subunit protein uS14, found in Aliarcobacter butzleri (strain RM4018) (Arcobacter butzleri).